Here is a 332-residue protein sequence, read N- to C-terminus: T-cell surface glycoprotein CD1c1 (332 aa).

Residues 1–17 (MLFLHFLFLDVVLGGSI) form the signal peptide. Topologically, residues 18–300 (TENVVQENIS…IILYWGHGLS (283 aa)) are extracellular. Residues asparagine 25, asparagine 38, asparagine 75, and asparagine 146 are each glycosylated (N-linked (GlcNAc...) asparagine). Disulfide bonds link cysteine 120–cysteine 184 and cysteine 224–cysteine 279. Positions 205-292 (PEVWLSSSPN…HSSLRDQDII (88 aa)) constitute an Ig-like domain. The chain crosses the membrane as a helical span at residues 301-321 (VILITFAVIVPLVLLIVLMLL). The Cytoplasmic portion of the chain corresponds to 322-332 (YKKRCTYQGIQ).

As to quaternary structure, heterodimer with B2M (beta-2-microglobulin).

The protein resides in the cell membrane. Its subcellular location is the endosome membrane. Functionally, antigen-presenting protein that binds self and non-self lipid and glycolipid antigens and presents them to T-cell receptors on natural killer T-cells. The chain is T-cell surface glycoprotein CD1c1 (CD1C1) from Cavia porcellus (Guinea pig).